Here is a 122-residue protein sequence, read N- to C-terminus: Small ribosomal subunit protein uS13 (122 aa).

The span at 98–116 (VRGQKTKTNARTRKGRRKT) shows a compositional bias: basic residues. Residues 98 to 122 (VRGQKTKTNARTRKGRRKTVGAATK) form a disordered region.

It belongs to the universal ribosomal protein uS13 family. Part of the 30S ribosomal subunit. Forms a loose heterodimer with protein S19. Forms two bridges to the 50S subunit in the 70S ribosome.

Functionally, located at the top of the head of the 30S subunit, it contacts several helices of the 16S rRNA. In the 70S ribosome it contacts the 23S rRNA (bridge B1a) and protein L5 of the 50S subunit (bridge B1b), connecting the 2 subunits; these bridges are implicated in subunit movement. Contacts the tRNAs in the A and P-sites. The polypeptide is Small ribosomal subunit protein uS13 (Campylobacter fetus subsp. fetus (strain 82-40)).